A 299-amino-acid chain; its full sequence is GTPase Era (299 aa).

One can recognise an Era-type G domain in the interval 5 to 172 (KSGFVSIIGR…IDVLKTYLPE (168 aa)). A G1 region spans residues 13–20 (GRPNVGKS). 13–20 (GRPNVGKS) is a binding site for GTP. The interval 39–43 (QTTRN) is G2. Residues 60-63 (DTPG) form a G3 region. Residues 60-64 (DTPGI) and 122-125 (NKID) each bind GTP. Residues 122 to 125 (NKID) are G4. The tract at residues 151–153 (ISA) is G5. Residues 203–280 (TSEEIPHAIG…YLELWVKVQR (78 aa)) form the KH type-2 domain.

This sequence belongs to the TRAFAC class TrmE-Era-EngA-EngB-Septin-like GTPase superfamily. Era GTPase family. Monomer.

The protein resides in the cytoplasm. It localises to the cell membrane. In terms of biological role, an essential GTPase that binds both GDP and GTP, with rapid nucleotide exchange. Plays a role in 16S rRNA processing and 30S ribosomal subunit biogenesis and possibly also in cell cycle regulation and energy metabolism. The sequence is that of GTPase Era from Staphylococcus aureus (strain NCTC 8325 / PS 47).